Reading from the N-terminus, the 694-residue chain is Elongation factor G (694 aa).

Residues 8–287 form the tr-type G domain; it reads EDYRNFGIMA…AVVSYLPSPI (280 aa). GTP-binding positions include 17–24, 86–90, and 140–143; these read AHIDAGKT, DTPGH, and NKMD.

Belongs to the TRAFAC class translation factor GTPase superfamily. Classic translation factor GTPase family. EF-G/EF-2 subfamily.

The protein localises to the cytoplasm. Its function is as follows. Catalyzes the GTP-dependent ribosomal translocation step during translation elongation. During this step, the ribosome changes from the pre-translocational (PRE) to the post-translocational (POST) state as the newly formed A-site-bound peptidyl-tRNA and P-site-bound deacylated tRNA move to the P and E sites, respectively. Catalyzes the coordinated movement of the two tRNA molecules, the mRNA and conformational changes in the ribosome. The protein is Elongation factor G of Bartonella tribocorum (strain CIP 105476 / IBS 506).